Reading from the N-terminus, the 303-residue chain is Trans-enoyl reductase tazE (303 aa).

Positions 1–26 are disordered; that stretch reads MTAEHDAAILPKPGGPLAVGKRATPE. 44–49 lines the NADP(+) pocket; that stretch reads CDYYQR. 136–143 is a substrate binding site; that stretch reads LAVLTALT. NADP(+)-binding positions include 170-173, 193-196, Tyr211, and 246-247; these read SSSV, SPKH, and LD. 265–269 lines the substrate pocket; that stretch reads VLPEC.

Belongs to the zinc-containing alcohol dehydrogenase family.

The protein operates within secondary metabolite biosynthesis. Trans-enoyl reductase; part of the gene cluster that mediates the biosynthesis of azaterrilone A and other azaphilones, a class of fungal metabolites characterized by a highly oxygenated pyrano-quinone bicyclic core and exhibiting a broad range of bioactivities. The first step of the pathway begins with the non-reducing polyketide synthase tazA that assembles one acetyl-CoA starter unit, five malonyl-CoA units, and catalyzes a series of Claisen condensations, methylation, PT-mediated cyclization, and finally releases the first hexaketide precursor through the R-domain. The tazA product then undergoes reduction on its terminal ketone and the following pyran-ring formation by yet undetermined enzyme(s). Dehydration and enoyl reduction, possibly involving the trans-enoyl reductase tazE leads to the next intermediate. TazD is predicted as an acetyltransferase and might catalyze the acetylation steps leading to the synthesis of azaterrilone A. Azaterrilone A is not the final product of the taz pathway and both the highly reducing polyketide synthase tazB and the dual enzyme tazHJ catalyze late steps of the pathway, leading to the production of the 2 final stereoisomers that contain additional polyketide modification whose structures have still to be determined. The sequence is that of Trans-enoyl reductase tazE from Aspergillus terreus (strain NIH 2624 / FGSC A1156).